Here is a 102-residue protein sequence, read N- to C-terminus: uncharacterized protein (102 aa).

This is an uncharacterized protein from Saccharomyces cerevisiae (strain ATCC 204508 / S288c) (Baker's yeast).